Reading from the N-terminus, the 59-residue chain is Large ribosomal subunit protein bL32 (59 aa).

Residues Met-1 to Glu-59 are disordered. The span at Arg-49 to Glu-59 shows a compositional bias: basic residues.

This sequence belongs to the bacterial ribosomal protein bL32 family.

In Laribacter hongkongensis (strain HLHK9), this protein is Large ribosomal subunit protein bL32.